The primary structure comprises 621 residues: Amino-acid acetyltransferase, mitochondrial (621 aa).

The transit peptide at 1-77 directs the protein to the mitochondrion; it reads MIPRAPPSTQ…RSYLASFGVQ (77 aa). Residues 213-233 are disordered; it reads PKPGSEEESEPGFSPPETHIY. The 177-residue stretch at 424-600 folds into the N-acetyltransferase domain; that stretch reads LPIRVVRSVS…GSAGLSFIED (177 aa).

Belongs to the acetyltransferase family.

The protein resides in the mitochondrion. It catalyses the reaction L-glutamate + acetyl-CoA = N-acetyl-L-glutamate + CoA + H(+). It functions in the pathway amino-acid biosynthesis; L-arginine biosynthesis; N(2)-acetyl-L-ornithine from L-glutamate: step 1/4. Functionally, N-acetylglutamate synthase involved in arginine biosynthesis. The chain is Amino-acid acetyltransferase, mitochondrial (ARG2) from Coprinopsis cinerea (strain Okayama-7 / 130 / ATCC MYA-4618 / FGSC 9003) (Inky cap fungus).